The chain runs to 152 residues: MVKRVQLVLTKDVSKLGRSGDLVDVAPGYARNYLIPQSLATHATPGILKQVERRREQERQRQLELRQQALEQKEALEKVGSLKIAKQVGENEAIFGTVTSQDVADAIQAATSQEVDRRGITIPDIGKLGTYKAEIKLFSDVTAQIDIEVVAS.

This sequence belongs to the bacterial ribosomal protein bL9 family.

Binds to the 23S rRNA. In Trichormus variabilis (strain ATCC 29413 / PCC 7937) (Anabaena variabilis), this protein is Large ribosomal subunit protein bL9.